A 153-amino-acid chain; its full sequence is MESTTRTIAARKHIALVAHDHCKQSLLDWVETNKAPLSEHVLYATGTTGNLMQLKTDLPVNSMLSGPMGGDQQVGTLISEGKIDMMIFFWDPLNAVPHDPDVKALLRLVTVWNILVATDRSTADFLISSPLFHQEVAIVIPDYQRYLAERLPS.

In terms of domain architecture, MGS-like spans 6 to 153 (RTIAARKHIA…QRYLAERLPS (148 aa)). Residues H19, K23, 45 to 48 (TGTT), and 65 to 66 (SG) contribute to the substrate site. The active-site Proton donor/acceptor is the D71. Residue H98 coordinates substrate.

It belongs to the methylglyoxal synthase family.

The enzyme catalyses dihydroxyacetone phosphate = methylglyoxal + phosphate. Catalyzes the formation of methylglyoxal from dihydroxyacetone phosphate. The polypeptide is Methylglyoxal synthase (Sodalis glossinidius (strain morsitans)).